An 852-amino-acid chain; its full sequence is MSSVSPIQIPSRLPLLLTHEGVLLPGSTMRTSVDSARNLQLVRSRLLKGTSLQSTILGVIPNTPDPASDAQDLPPLHRIGTAALAVQVVGSNWPKPHYTLLITGLCRFQIVQVLKEKPYPIAEVEQLDRLEEFPSTCKMREELGELSEQFYKYAVQLVEMLDMSVPAVAKLRRLLDSLPREALPDILTSIIRTSNKEKLQILDAVSLEERFKMTIPLLVRQIEGLKLLQKTRKPKQDDDKRVIAIRPIRRITHISGTLEDEDEDEDNDDIVMLEKEIRTSSMPEQAHKVCVKEIKRLKKMPQSMPEYALTRNYLELMVELPWNKSTTDRLDIRAARILLDNDHYAMEKLKKRVLEYLVVRQLKNNLKGPILCFVGPPGVGKTSVGRLVAKTLGREFHRIALGGVCDQSDIRGHRRTYVGSMPGRIINGLKTVGVNNPVFLLDEVDKLGKSLQGDPAAALLEVLDPEQNHNFTDHYLNVAFDLSRVLFIATANTTATIPAALLDRMEIIQVPGYTQEEKIEIAHRHLIPKQLEQHGLTPQQIQIPQVTTLDIITRYTREAGVRSLDRKLGAICRAVAVKVAEGQHKEAKLDRSDVTEREGCREHILEDEKPESISDTTDLALPPEMPILIDFHALKDILGPPMYEMEVSQRLSQPGVAIGLAWTPLGGEIMFVEASRMDGEGQLTLTGQLGDVMKESAHLAISWLRSNAKKYQLTNAFGSFDLLDNTDIHLHFPAGAVTKDGPSAGVTIVTCLASLFSERLVRSDVAMTGEITLRGLVLPVGGIKDKVLAAHRAGLKQVIIPRRNEKDLEGIPGNVRQDLSFVTASCLDEVLNAAFDGGFTVKTRPGLLNSKL.

S2 carries the post-translational modification N-acetylserine. The Lon N-terminal domain occupies 13–222; the sequence is LPLLLTHEGV…MTIPLLVRQI (210 aa). 375-382 contributes to the ATP binding site; that stretch reads GPPGVGKT. In terms of domain architecture, Lon proteolytic spans 651–837; the sequence is LSQPGVAIGL…DEVLNAAFDG (187 aa). Active-site residues include S743 and K786. Residues 850-852 carry the Microbody targeting signal motif; sequence SKL.

The protein belongs to the peptidase S16 family. As to quaternary structure, interacts with PEX5. Interacts with TYSND1. May interact with enzymes involved in beta-oxidation of fatty acids, including ACOX1/AOX.

The protein resides in the peroxisome matrix. It catalyses the reaction Hydrolysis of proteins in presence of ATP.. Functionally, ATP-dependent serine protease that mediates the selective degradation of misfolded and unassembled polypeptides in the peroxisomal matrix. Necessary for type 2 peroxisome targeting signal (PTS2)-containing protein processing and facilitates peroxisome matrix protein import. May indirectly regulate peroxisomal fatty acid beta-oxidation through degradation of the self-processed forms of TYSND1. This chain is Lon protease homolog 2, peroxisomal, found in Pongo abelii (Sumatran orangutan).